A 283-amino-acid chain; its full sequence is MIARILDGRTCAEKVKARVKENIRLLQEKGLPSPGLAVILVGNDPASATYVAHKERACQAVGIRSTVYRMPNTITESELASKIDECNRDSNTHGILLQLPLPAHIDPANLLERIRPDKDVDGFHPYNLGRLVQRRPALRPCTPYGVMTLLTETHENLEGKHAVIVGASNIVGRPMALELLLAKCTVTVCHRFTRDLAEHVKSAELLIVAIGKPGIIQSEWIKPGAIVIDVGFSRLSPNKIAGDIDFETAKERASWITPVPGGVGPMTVATLLENTLQAAQTFL.

G166–S168 is an NADP(+) binding site.

It belongs to the tetrahydrofolate dehydrogenase/cyclohydrolase family. In terms of assembly, homodimer.

The enzyme catalyses (6R)-5,10-methylene-5,6,7,8-tetrahydrofolate + NADP(+) = (6R)-5,10-methenyltetrahydrofolate + NADPH. It carries out the reaction (6R)-5,10-methenyltetrahydrofolate + H2O = (6R)-10-formyltetrahydrofolate + H(+). Its pathway is one-carbon metabolism; tetrahydrofolate interconversion. Functionally, catalyzes the oxidation of 5,10-methylenetetrahydrofolate to 5,10-methenyltetrahydrofolate and then the hydrolysis of 5,10-methenyltetrahydrofolate to 10-formyltetrahydrofolate. The sequence is that of Bifunctional protein FolD from Coxiella burnetii (strain Dugway 5J108-111).